Reading from the N-terminus, the 359-residue chain is MNEPSPSDWHLDAYDYELPPDRIAQSAVEPRDHARLSVFPDREQLWHRHFYDLPQLLRPGDLLIVNDTRVIPARLYGQKIETGVPVEVLLVEEHGPGYWLTLVKPGKRLKPGSAIAFGPNPEDPLLVADVEASDPATGGRWLRFRGEAEAFWSQLATLGEMPLPPYIHTTASDPERYQTVYSRELGAVAAPTAGLHFTPELLTTLADMGIATAPVTLHVGIGTFRSVDVEDIRQHEMHSERMMVPAATVEKIQATKAAGGRVIAVGTTSVRAIEGAAASGELKPGSDRVNLFIYPGYRWQIIDGLITNFHLPRSSLMMLVSALIGRDRLLSAYATAIAEQYRFYSFGDAMLILPDAKLP.

The protein belongs to the QueA family. Monomer.

Its subcellular location is the cytoplasm. It carries out the reaction 7-aminomethyl-7-carbaguanosine(34) in tRNA + S-adenosyl-L-methionine = epoxyqueuosine(34) in tRNA + adenine + L-methionine + 2 H(+). It participates in tRNA modification; tRNA-queuosine biosynthesis. In terms of biological role, transfers and isomerizes the ribose moiety from AdoMet to the 7-aminomethyl group of 7-deazaguanine (preQ1-tRNA) to give epoxyqueuosine (oQ-tRNA). The protein is S-adenosylmethionine:tRNA ribosyltransferase-isomerase of Synechococcus sp. (strain ATCC 27144 / PCC 6301 / SAUG 1402/1) (Anacystis nidulans).